Here is a 308-residue protein sequence, read N- to C-terminus: Putative transcription elongation factor S-II (308 aa).

In terms of domain architecture, TFIIS N-terminal spans 5–84 (EETQSLCKQV…KDWKNVVDGK (80 aa)). The disordered stretch occupies residues 82–126 (DGKSKSQDDGGAPPAKKHRKESVEEAKPEKKKIEAPYKRPEPSSR). Positions 102–125 (ESVEEAKPEKKKIEAPYKRPEPSS) are enriched in basic and acidic residues. Positions 148-263 (TRLKSAQLLL…EHQMSVQQGT (116 aa)) constitute a TFIIS central domain. The TFIIS-type zinc finger occupies 266–306 (DMFKCGKCGKKNCTYTQLQTRSSDEPMTTFVFCLECGNRWK). Cys270, Cys273, Cys298, and Cys301 together coordinate Zn(2+).

It belongs to the TFS-II family.

It localises to the nucleus. Functionally, necessary for efficient RNA polymerase II transcription elongation past template-encoded arresting sites. The arresting sites in DNA have the property of trapping a certain fraction of elongating RNA polymerases that pass through, resulting in locked ternary complexes. Cleavage of the nascent transcript by S-II allows the resumption of elongation from the new 3'-terminus. The chain is Putative transcription elongation factor S-II from Caenorhabditis elegans.